A 1150-amino-acid chain; its full sequence is ATP-dependent helicase/deoxyribonuclease subunit B (1150 aa).

8 to 15 serves as a coordination point for ATP; the sequence is GRSGSGKS. Residues C789, C1108, C1111, and C1117 each contribute to the [4Fe-4S] cluster site.

Belongs to the helicase family. AddB/RexB type 1 subfamily. In terms of assembly, heterodimer of AddA and AddB. Mg(2+) serves as cofactor. Requires [4Fe-4S] cluster as cofactor.

In terms of biological role, the heterodimer acts as both an ATP-dependent DNA helicase and an ATP-dependent, dual-direction single-stranded exonuclease. Recognizes the chi site generating a DNA molecule suitable for the initiation of homologous recombination. The AddB subunit has 5' -&gt; 3' nuclease activity but not helicase activity. This chain is ATP-dependent helicase/deoxyribonuclease subunit B, found in Clostridium tetani (strain Massachusetts / E88).